A 215-amino-acid chain; its full sequence is MEVVILNENGDSVGNLEVVDEIFKSEVNNNLLYEAIKNELANRRQGTHSTKTRAEVSGGGKKPWRQKGTGRARAGSTRSPIWVGGGKTHTPKPRDYSYRLPKKMKRKALLSVLSLKYGNNVLKVFEDFTFDAPKTKRMASFISKVKEPNSRKVAFVVGKDESLGDNYNKLLLSLRNIKDLKLVNADSMSIHPLYYADEVYFTKTALSKLNARIKG.

Residues 43-97 form a disordered region; the sequence is RRQGTHSTKTRAEVSGGGKKPWRQKGTGRARAGSTRSPIWVGGGKTHTPKPRDYS.

The protein belongs to the universal ribosomal protein uL4 family. Part of the 50S ribosomal subunit.

Its function is as follows. One of the primary rRNA binding proteins, this protein initially binds near the 5'-end of the 23S rRNA. It is important during the early stages of 50S assembly. It makes multiple contacts with different domains of the 23S rRNA in the assembled 50S subunit and ribosome. Functionally, forms part of the polypeptide exit tunnel. This chain is Large ribosomal subunit protein uL4, found in Brachyspira pilosicoli (Serpulina pilosicoli).